The following is a 100-amino-acid chain: Large ribosomal subunit protein uL23c (100 aa).

This sequence belongs to the universal ribosomal protein uL23 family. In terms of assembly, part of the 50S ribosomal subunit.

The protein localises to the plastid. It localises to the chloroplast. Its function is as follows. Binds to 23S rRNA. This Euglena gracilis protein is Large ribosomal subunit protein uL23c (rpl23).